Reading from the N-terminus, the 392-residue chain is V-type proton ATPase subunit C (392 aa).

At A2 the chain carries N-acetylalanine.

Belongs to the V-ATPase C subunit family. In terms of assembly, V-ATPase is a heteromultimeric enzyme composed of a peripheral catalytic V1 complex (components A to H) attached to an integral membrane V0 proton pore complex (components: a, c, c', c'', d, e, f and VOA1). Interacts directly with VMA4.

It is found in the vacuole membrane. Its function is as follows. Subunit of the V1 complex of vacuolar(H+)-ATPase (V-ATPase), a multisubunit enzyme composed of a peripheral complex (V1) that hydrolyzes ATP and a membrane integral complex (V0) that translocates protons. V-ATPase is responsible for acidifying and maintaining the pH of intracellular compartments. Subunit C is necessary for the assembly of the catalytic sector of the enzyme and is likely to have a specific function in its catalytic activity. Reversibly leaves the enzyme after glucose depletion, causing the catalytic subcomplex V1 to detach from the V0 section. The polypeptide is V-type proton ATPase subunit C (Saccharomyces cerevisiae (strain ATCC 204508 / S288c) (Baker's yeast)).